A 382-amino-acid polypeptide reads, in one-letter code: MAKKQKKLDEISKKFGDERQKALDNALKNIEKDFGKGAIMRLGERAEQKVQVMSSGSLALDIALGAGGYPKGRIIEIYGPESSGKTTVALHAVAQAQKEGGIAAFIDAEHALDPSYAAALGVNIDELLLSQPDSGEQGLEIAGKLIDSGAVDLVVVDSVAALVPRAEIDGDIGDSHVGLQARMMSQAMRKLSASINKTKTIAIFINQLREKVGVMFGNPETTPGGRALKFYASVRLDVRGNTQIKGTGDEKDTNVGKETKIKVVKNKVAPPFKEAFVEIMYGEGISKTGELIKIATDLDIIKKAGAWYSYNDEKIGQGSENAKKYLADHPEVFGEIDRQVRVRYGLIDGDDMAEAVGNKAESPVETLEEVTLDLDDAIEIEE.

An ATP-binding site is contributed by 79–86; the sequence is GPESSGKT.

Belongs to the RecA family.

Its subcellular location is the cytoplasm. Functionally, can catalyze the hydrolysis of ATP in the presence of single-stranded DNA, the ATP-dependent uptake of single-stranded DNA by duplex DNA, and the ATP-dependent hybridization of homologous single-stranded DNAs. It interacts with LexA causing its activation and leading to its autocatalytic cleavage. This Streptococcus sanguinis (strain SK36) protein is Protein RecA.